We begin with the raw amino-acid sequence, 185 residues long: Translation initiation factor IF-3 (185 aa).

It belongs to the IF-3 family. In terms of assembly, monomer.

The protein localises to the cytoplasm. IF-3 binds to the 30S ribosomal subunit and shifts the equilibrium between 70S ribosomes and their 50S and 30S subunits in favor of the free subunits, thus enhancing the availability of 30S subunits on which protein synthesis initiation begins. In Coxiella burnetii (strain RSA 493 / Nine Mile phase I), this protein is Translation initiation factor IF-3.